Here is a 280-residue protein sequence, read N- to C-terminus: Tryptophan 2,3-dioxygenase (280 aa).

Substrate contacts are provided by residues 47 to 51 (FVVQH), tyrosine 109, and arginine 113. Histidine 236 provides a ligand contact to heme. Threonine 250 is a binding site for substrate.

The protein belongs to the tryptophan 2,3-dioxygenase family. As to quaternary structure, homotetramer. It depends on heme as a cofactor.

It catalyses the reaction L-tryptophan + O2 = N-formyl-L-kynurenine. It participates in amino-acid degradation; L-tryptophan degradation via kynurenine pathway; L-kynurenine from L-tryptophan: step 1/2. In terms of biological role, heme-dependent dioxygenase that catalyzes the oxidative cleavage of the L-tryptophan (L-Trp) pyrrole ring and converts L-tryptophan to N-formyl-L-kynurenine. Catalyzes the oxidative cleavage of the indole moiety. The sequence is that of Tryptophan 2,3-dioxygenase from Serratia proteamaculans (strain 568).